A 325-amino-acid chain; its full sequence is tRNA(Ile)-lysidine synthase (325 aa).

Residue 34 to 39 (SGGQDS) participates in ATP binding.

Belongs to the tRNA(Ile)-lysidine synthase family.

The protein resides in the cytoplasm. It carries out the reaction cytidine(34) in tRNA(Ile2) + L-lysine + ATP = lysidine(34) in tRNA(Ile2) + AMP + diphosphate + H(+). Its function is as follows. Ligates lysine onto the cytidine present at position 34 of the AUA codon-specific tRNA(Ile) that contains the anticodon CAU, in an ATP-dependent manner. Cytidine is converted to lysidine, thus changing the amino acid specificity of the tRNA from methionine to isoleucine. The sequence is that of tRNA(Ile)-lysidine synthase from Synechococcus sp. (strain ATCC 27144 / PCC 6301 / SAUG 1402/1) (Anacystis nidulans).